A 336-amino-acid chain; its full sequence is Aspartate carbamoyltransferase catalytic subunit (336 aa).

Carbamoyl phosphate-binding residues include R72 and T73. K100 is a binding site for L-aspartate. Residues R122, H155, and Q158 each coordinate carbamoyl phosphate. Residues R188 and R242 each coordinate L-aspartate. Positions 288 and 289 each coordinate carbamoyl phosphate.

It belongs to the aspartate/ornithine carbamoyltransferase superfamily. ATCase family. As to quaternary structure, heterododecamer (2C3:3R2) of six catalytic PyrB chains organized as two trimers (C3), and six regulatory PyrI chains organized as three dimers (R2).

The enzyme catalyses carbamoyl phosphate + L-aspartate = N-carbamoyl-L-aspartate + phosphate + H(+). It participates in pyrimidine metabolism; UMP biosynthesis via de novo pathway; (S)-dihydroorotate from bicarbonate: step 2/3. Its function is as follows. Catalyzes the condensation of carbamoyl phosphate and aspartate to form carbamoyl aspartate and inorganic phosphate, the committed step in the de novo pyrimidine nucleotide biosynthesis pathway. This Lactobacillus leichmannii protein is Aspartate carbamoyltransferase catalytic subunit.